The primary structure comprises 310 residues: HPr kinase/phosphorylase 1 (310 aa).

Residues H139 and K160 contribute to the active site. 154-161 provides a ligand contact to ATP; the sequence is GQSGVGKS. S161 is a Mg(2+) binding site. Catalysis depends on D178, which acts as the Proton acceptor; for phosphorylation activity. Proton donor; for dephosphorylation activity. Positions 202-211 are important for the catalytic mechanism of both phosphorylation and dephosphorylation; it reads LEIRGLGIIN. E203 is a Mg(2+) binding site. R244 is an active-site residue. An important for the catalytic mechanism of dephosphorylation region spans residues 265–270; that stretch reads PVRPGR.

Belongs to the HPrK/P family. In terms of assembly, homohexamer. Requires Mg(2+) as cofactor.

The catalysed reaction is [HPr protein]-L-serine + ATP = [HPr protein]-O-phospho-L-serine + ADP + H(+). It catalyses the reaction [HPr protein]-O-phospho-L-serine + phosphate + H(+) = [HPr protein]-L-serine + diphosphate. In terms of biological role, catalyzes the ATP- as well as the pyrophosphate-dependent phosphorylation of a specific serine residue in HPr, a phosphocarrier protein of the phosphoenolpyruvate-dependent sugar phosphotransferase system (PTS). HprK/P also catalyzes the pyrophosphate-producing, inorganic phosphate-dependent dephosphorylation (phosphorolysis) of seryl-phosphorylated HPr (P-Ser-HPr). The two antagonistic activities of HprK/P are regulated by several intracellular metabolites, which change their concentration in response to the absence or presence of rapidly metabolisable carbon sources (glucose, fructose, etc.) in the growth medium. Also phosphorylates/dephosphorylates the HPr-like catabolite repression protein crh on a specific serine residue. Therefore, by controlling the phosphorylation state of HPr and crh, HPrK/P is a sensor enzyme that plays a major role in the regulation of carbon metabolism and sugar transport: it mediates carbon catabolite repression (CCR), and regulates PTS-catalyzed carbohydrate uptake and inducer exclusion. The sequence is that of HPr kinase/phosphorylase 1 (hprK1) from Oceanobacillus iheyensis (strain DSM 14371 / CIP 107618 / JCM 11309 / KCTC 3954 / HTE831).